Consider the following 212-residue polypeptide: Methylthioribulose-1-phosphate dehydratase (212 aa).

Zn(2+) contacts are provided by H103 and H105.

Belongs to the aldolase class II family. MtnB subfamily. The cofactor is Zn(2+).

It carries out the reaction 5-(methylsulfanyl)-D-ribulose 1-phosphate = 5-methylsulfanyl-2,3-dioxopentyl phosphate + H2O. It participates in amino-acid biosynthesis; L-methionine biosynthesis via salvage pathway; L-methionine from S-methyl-5-thio-alpha-D-ribose 1-phosphate: step 2/6. In terms of biological role, catalyzes the dehydration of methylthioribulose-1-phosphate (MTRu-1-P) into 2,3-diketo-5-methylthiopentyl-1-phosphate (DK-MTP-1-P). In Sorangium cellulosum (strain So ce56) (Polyangium cellulosum (strain So ce56)), this protein is Methylthioribulose-1-phosphate dehydratase.